The sequence spans 201 residues: Holliday junction branch migration complex subunit RuvA (201 aa).

The interval 1 to 61 is domain I; the sequence is MIEFVKGTID…EDAFSLYGFS (61 aa). The segment at 62–140 is domain II; that stretch reads TREEKALFTK…DVVPEMIDNL (79 aa). Residues 141–150 form a flexible linker region; sequence FNHEARIEKQ. Residues 151-201 form a domain III region; that stretch reads EAETALDEALEALRVLGYAEKEIKKVLPHLKEETALSTDQYVKKALQKLLK.

Belongs to the RuvA family. Homotetramer. Forms an RuvA(8)-RuvB(12)-Holliday junction (HJ) complex. HJ DNA is sandwiched between 2 RuvA tetramers; dsDNA enters through RuvA and exits via RuvB. An RuvB hexamer assembles on each DNA strand where it exits the tetramer. Each RuvB hexamer is contacted by two RuvA subunits (via domain III) on 2 adjacent RuvB subunits; this complex drives branch migration. In the full resolvosome a probable DNA-RuvA(4)-RuvB(12)-RuvC(2) complex forms which resolves the HJ.

The protein resides in the cytoplasm. Functionally, the RuvA-RuvB-RuvC complex processes Holliday junction (HJ) DNA during genetic recombination and DNA repair, while the RuvA-RuvB complex plays an important role in the rescue of blocked DNA replication forks via replication fork reversal (RFR). RuvA specifically binds to HJ cruciform DNA, conferring on it an open structure. The RuvB hexamer acts as an ATP-dependent pump, pulling dsDNA into and through the RuvAB complex. HJ branch migration allows RuvC to scan DNA until it finds its consensus sequence, where it cleaves and resolves the cruciform DNA. The polypeptide is Holliday junction branch migration complex subunit RuvA (Bacillus velezensis (strain DSM 23117 / BGSC 10A6 / LMG 26770 / FZB42) (Bacillus amyloliquefaciens subsp. plantarum)).